Consider the following 677-residue polypeptide: Penicillin-binding protein activator LpoA (677 aa).

The N-terminal stretch at 1-26 (MLPSKIVRHKAGRFVPVLLAGLILAA) is a signal peptide. C27 is lipidated: N-palmitoyl cysteine. Residue C27 is the site of S-diacylglycerol cysteine attachment. The segment at 309–359 (QPADANAVVSPSANPAAAQQSGTAQQPATTQQQPQQQPAAEPASNAQVKVY) is disordered. Low complexity predominate over residues 313–355 (ANAVVSPSANPAAAQQSGTAQQPATTQQQPQQQPAAEPASNAQ).

The protein belongs to the LpoA family. As to quaternary structure, interacts with PBP1a.

It localises to the cell outer membrane. Its function is as follows. Regulator of peptidoglycan synthesis that is essential for the function of penicillin-binding protein 1A (PBP1a). This is Penicillin-binding protein activator LpoA from Pantoea ananatis (strain LMG 20103).